The sequence spans 837 residues: Tuftelin-interacting protein 11 (837 aa).

Composition is skewed to basic and acidic residues over residues 1-13 (MSLS…GEGR) and 53-64 (VWAERDSDDERP). Disordered regions lie at residues 1 to 21 (MSLS…DDER), 53 to 72 (VWAE…KRAR), and 85 to 133 (LKKG…KGFA). The segment at 1 to 50 (MSLSHLYRDGEGRIDDDDDERENFEITDWDLQNEFNPNRQRHWQTKEEAT) is required for interaction with DHX15. Residues serine 2, serine 59, and serine 98 each carry the phosphoserine modification. Positions 91-102 (EEAELEDSDDEE) are enriched in acidic residues. The segment covering 103 to 116 (KPVKQDDFPKDFGP) has biased composition (basic and acidic residues). Position 144 is a phosphoserine (serine 144). The region spanning 149 to 195 (TKGIGQKLLQKMGYVPGRGLGKNAQGIINPIEAKQRKGKGAVGAYGS) is the G-patch domain. The segment at 179 to 236 (IEAKQRKGKGAVGAYGSERTTQSMQDFPVVDSEEEAEEEFQKELSQWRKDPSGSKKKP) is disordered. Serine 210 is modified (phosphoserine). The span at 217-231 (EFQKELSQWRKDPSG) shows a compositional bias: basic and acidic residues. The Nuclear localization signal motif lies at 700-705 (VKDKFN). Residues 710 to 734 (IMNRAVSSNVGAYMQPGARENIAYL) are required for nuclear speckle localization.

Belongs to the TFP11/STIP family. As to quaternary structure, identified in the spliceosome C complex. Found in the Intron Large (IL) complex, a post-mRNA release spliceosomal complex containing the excised intron, U2, U5 and U6 snRNPs, and splicing factors. Interacts with TUFT1. Interacts with DHX15; indicative for a recruitment of DHX15 to the IL complex. Interacts with GCFC2.

It localises to the cytoplasm. The protein localises to the nucleus. Involved in pre-mRNA splicing, specifically in spliceosome disassembly during late-stage splicing events. Intron turnover seems to proceed through reactions in two lariat-intron associated complexes termed Intron Large (IL) and Intron Small (IS). In cooperation with DHX15 seems to mediate the transition of the U2, U5 and U6 snRNP-containing IL complex to the snRNP-free IS complex leading to efficient debranching and turnover of excised introns. May play a role in the differentiation of ameloblasts and odontoblasts or in the forming of the enamel extracellular matrix. This chain is Tuftelin-interacting protein 11 (TFIP11), found in Pongo abelii (Sumatran orangutan).